The chain runs to 395 residues: Protein HIGH CHLOROPHYLL FLUORESCENCE PHENOTYPE 244, chloroplastic (395 aa).

Residues 1 to 64 (MASLRLPAQL…ERSIVVPVTC (64 aa)) constitute a chloroplast transit peptide.

Belongs to the NmrA-type oxidoreductase family. In terms of assembly, component of a high molecular weight complex containing OHP1, OHP2 and HCF244, and PSII core proteins D1/D2, HCF136 and HCF173. Interacts with OHP1. Forms a trimeric complex with OHP1 and OHP2 that mutually stabilizes each subunit.

The protein resides in the plastid. It localises to the chloroplast stroma. It is found in the chloroplast thylakoid membrane. In terms of biological role, auxiliary factor required, together with HCF173, for the biogenesis of photosystem II (PSII), especially for the synthesis of the reaction center proteins (e.g. D1), via the regulation of the corresponding mRNA (e.g. psbA) translation initiation (ribosomal loading) and stabilization. Forms a trimeric complex with OHP1 and OHP2 that is required to promote PSII core subunit assembly. The trimeric complex forms a transient PSII reaction center-like complex with PsbA, PsbD, PsbE, PsbF and PsbI subunits in thylakoids for early assembly of PSII as well as PSII repair. The trimeric complex is required for the recruitment of ribosomes to the psbA mRNA during PSII biogenesis and repair. The protein is Protein HIGH CHLOROPHYLL FLUORESCENCE PHENOTYPE 244, chloroplastic of Arabidopsis thaliana (Mouse-ear cress).